Here is a 329-residue protein sequence, read N- to C-terminus: GTPase Obg (329 aa).

One can recognise an Obg domain in the interval methionine 1 to leucine 159. Residues alanine 160–glycine 328 form the OBG-type G domain. Residues glycine 166 to serine 173, phenylalanine 191 to valine 195, aspartate 213 to glycine 216, asparagine 280 to glutamate 283, and serine 309 to alanine 311 contribute to the ATP site. Positions 173 and 193 each coordinate Mg(2+).

Belongs to the TRAFAC class OBG-HflX-like GTPase superfamily. OBG GTPase family. Monomer. The cofactor is Mg(2+).

It is found in the cytoplasm. Its function is as follows. An essential GTPase which binds GTP, GDP and possibly (p)ppGpp with moderate affinity, with high nucleotide exchange rates and a fairly low GTP hydrolysis rate. Plays a role in control of the cell cycle, stress response, ribosome biogenesis and in those bacteria that undergo differentiation, in morphogenesis control. The protein is GTPase Obg of Prochlorococcus marinus (strain MIT 9303).